The sequence spans 171 residues: Crossover junction endodeoxyribonuclease RuvC (171 aa).

Residues Asp-7, Glu-66, and Asp-138 contribute to the active site. The Mg(2+) site is built by Asp-7, Glu-66, and Asp-138.

The protein belongs to the RuvC family. Homodimer which binds Holliday junction (HJ) DNA. The HJ becomes 2-fold symmetrical on binding to RuvC with unstacked arms; it has a different conformation from HJ DNA in complex with RuvA. In the full resolvosome a probable DNA-RuvA(4)-RuvB(12)-RuvC(2) complex forms which resolves the HJ. The cofactor is Mg(2+).

The protein resides in the cytoplasm. It catalyses the reaction Endonucleolytic cleavage at a junction such as a reciprocal single-stranded crossover between two homologous DNA duplexes (Holliday junction).. Its function is as follows. The RuvA-RuvB-RuvC complex processes Holliday junction (HJ) DNA during genetic recombination and DNA repair. Endonuclease that resolves HJ intermediates. Cleaves cruciform DNA by making single-stranded nicks across the HJ at symmetrical positions within the homologous arms, yielding a 5'-phosphate and a 3'-hydroxyl group; requires a central core of homology in the junction. The consensus cleavage sequence is 5'-(A/T)TT(C/G)-3'. Cleavage occurs on the 3'-side of the TT dinucleotide at the point of strand exchange. HJ branch migration catalyzed by RuvA-RuvB allows RuvC to scan DNA until it finds its consensus sequence, where it cleaves and resolves the cruciform DNA. This chain is Crossover junction endodeoxyribonuclease RuvC, found in Francisella philomiragia subsp. philomiragia (strain ATCC 25017 / CCUG 19701 / FSC 153 / O#319-036).